The following is a 318-amino-acid chain: NADH-ubiquinone oxidoreductase chain 1 (318 aa).

Transmembrane regions (helical) follow at residues I5–I25, S69–I89, L102–G122, L148–I168, I174–E194, V215–F235, L253–V273, and F293–V313.

This sequence belongs to the complex I subunit 1 family.

The protein resides in the mitochondrion inner membrane. It catalyses the reaction a ubiquinone + NADH + 5 H(+)(in) = a ubiquinol + NAD(+) + 4 H(+)(out). Its function is as follows. Core subunit of the mitochondrial membrane respiratory chain NADH dehydrogenase (Complex I) that is believed to belong to the minimal assembly required for catalysis. Complex I functions in the transfer of electrons from NADH to the respiratory chain. The immediate electron acceptor for the enzyme is believed to be ubiquinone. This chain is NADH-ubiquinone oxidoreductase chain 1 (MT-ND1), found in Myxine glutinosa (Atlantic hagfish).